A 205-amino-acid polypeptide reads, in one-letter code: Thiamine-phosphate synthase (205 aa).

Residues 37–41 (QVREK) and Asn69 contribute to the 4-amino-2-methyl-5-(diphosphooxymethyl)pyrimidine site. Residues Asp70 and Asp89 each coordinate Mg(2+). Ser108 serves as a coordination point for 4-amino-2-methyl-5-(diphosphooxymethyl)pyrimidine. 134 to 136 (TGS) lines the 2-[(2R,5Z)-2-carboxy-4-methylthiazol-5(2H)-ylidene]ethyl phosphate pocket. Lys137 is a binding site for 4-amino-2-methyl-5-(diphosphooxymethyl)pyrimidine. 2-[(2R,5Z)-2-carboxy-4-methylthiazol-5(2H)-ylidene]ethyl phosphate contacts are provided by residues Gly165 and 185-186 (IS).

Belongs to the thiamine-phosphate synthase family. Mg(2+) serves as cofactor.

It catalyses the reaction 2-[(2R,5Z)-2-carboxy-4-methylthiazol-5(2H)-ylidene]ethyl phosphate + 4-amino-2-methyl-5-(diphosphooxymethyl)pyrimidine + 2 H(+) = thiamine phosphate + CO2 + diphosphate. The enzyme catalyses 2-(2-carboxy-4-methylthiazol-5-yl)ethyl phosphate + 4-amino-2-methyl-5-(diphosphooxymethyl)pyrimidine + 2 H(+) = thiamine phosphate + CO2 + diphosphate. The catalysed reaction is 4-methyl-5-(2-phosphooxyethyl)-thiazole + 4-amino-2-methyl-5-(diphosphooxymethyl)pyrimidine + H(+) = thiamine phosphate + diphosphate. It functions in the pathway cofactor biosynthesis; thiamine diphosphate biosynthesis; thiamine phosphate from 4-amino-2-methyl-5-diphosphomethylpyrimidine and 4-methyl-5-(2-phosphoethyl)-thiazole: step 1/1. Condenses 4-methyl-5-(beta-hydroxyethyl)thiazole monophosphate (THZ-P) and 2-methyl-4-amino-5-hydroxymethyl pyrimidine pyrophosphate (HMP-PP) to form thiamine monophosphate (TMP). The chain is Thiamine-phosphate synthase from Clostridium botulinum (strain Kyoto / Type A2).